A 380-amino-acid polypeptide reads, in one-letter code: uncharacterized protein (380 aa).

Residues 256–301 (DKEEKIQKSYQYQTELITELQGRIAELEKENQSLKENVKEPETSKP) are a coiled coil.

This is an uncharacterized protein from Pasteurella multocida (strain Pm70).